The chain runs to 442 residues: D-serine dehydratase 1 (442 aa).

Residue Lys118 is modified to N6-(pyridoxal phosphate)lysine.

This sequence belongs to the serine/threonine dehydratase family. DsdA subfamily. In terms of assembly, monomer. Pyridoxal 5'-phosphate is required as a cofactor.

It carries out the reaction D-serine = pyruvate + NH4(+). This chain is D-serine dehydratase 1, found in Escherichia coli (strain UTI89 / UPEC).